The sequence spans 561 residues: Putative transport protein YbjL (561 aa).

5 helical membrane passes run 8–28 (LLNG…LCLG), 32–52 (LGSI…LLGQ), 66–86 (FMLF…SIFF), 94–114 (MLAL…GKLF), and 158–178 (NLSL…IVGA). RCK C-terminal domains follow at residues 200 to 288 (RGLD…SFRN) and 292 to 373 (VFDR…RIGF). A run of 5 helical transmembrane segments spans residues 383 to 403 (LLAF…TFQF), 406 to 426 (FSFG…LGFM), 451 to 471 (VFMA…LGAI), 475 to 495 (MLIA…LFGA), and 540 to 560 (AIAN…WPGL).

The protein belongs to the AAE transporter (TC 2.A.81) family. YbjL subfamily.

The protein localises to the cell membrane. The sequence is that of Putative transport protein YbjL from Escherichia coli O139:H28 (strain E24377A / ETEC).